The sequence spans 713 residues: MEGTPNVPQAHRYELTLAGRPLVLETGKYAKQASGSVLVRYADTVVLATAQASETPVEADFLPLTVEFEERHYAVGKIPGSFMRREGRPGEKAILSARMTDRPIRPLFPKGFRHEVQIIVTVLSADQKNPPDILGPIAASAALMLSDIPWEGPIAAVRVGLIGGSFVLNPTLQELEESQLDLVVAGSKEAILMVEAEAGEVDEETLVQALEFAHKEMQPILELQEAMARELAKPKMAWTPPESLPEEEKEALYRLALERGLSQVLQTASKGERSRALAEFAERLIAEALPKGEDGTPDEGKKPLYESAFDEVVRRELRRLVLEEGKRADGRGPKDLRPIWIEVDVLPRAHGSAVFTRGETQVLGTVTLGTGRDEQILDDLGIDETEKFLVHYNFPPFSTGEVRRLRGVSRREVGHGNLAKRALKAVMPKEEDFPYTIRVVGDVLESNGSSSMATVCAGCLALMDAGVPIRAPVAGVAMGLVWEENRAVILTDILGLEDALGDMDFKVAGTRKGVTALQMDNKVGGLPREVLKEALLQAREARLKILDLMETVLPAPRPELKPFAPRILSLKVPVEKIGLVIGPGGKNVRALEELGVEVDIEEDGTVRIYSSDLNAALEAKKRIEDLTREAKVGEIYEGTVTRITPFGAFISLFPGTEGLLHISQIAPGRVERVEDHLKVGDVIKVKVHRIDERGKIDLIRPELEGKIPPRRRK.

Mg(2+) is bound by residues aspartate 498 and aspartate 504. The 67-residue stretch at 565–631 (PRILSLKVPV…RIEDLTREAK (67 aa)) folds into the KH domain. An S1 motif domain is found at 633-701 (GEIYEGTVTR…ERGKIDLIRP (69 aa)).

The protein belongs to the polyribonucleotide nucleotidyltransferase family. Mg(2+) serves as cofactor.

Its subcellular location is the cytoplasm. It carries out the reaction RNA(n+1) + phosphate = RNA(n) + a ribonucleoside 5'-diphosphate. Involved in mRNA degradation. Catalyzes the phosphorolysis of single-stranded polyribonucleotides processively in the 3'- to 5'-direction. In Thermus thermophilus, this protein is Polyribonucleotide nucleotidyltransferase.